The following is a 307-amino-acid chain: Ribosomal RNA small subunit methyltransferase H (307 aa).

Residues 32–34 (GGH), D52, F78, D99, and Q106 each bind S-adenosyl-L-methionine.

The protein belongs to the methyltransferase superfamily. RsmH family.

The protein localises to the cytoplasm. The catalysed reaction is cytidine(1402) in 16S rRNA + S-adenosyl-L-methionine = N(4)-methylcytidine(1402) in 16S rRNA + S-adenosyl-L-homocysteine + H(+). Its function is as follows. Specifically methylates the N4 position of cytidine in position 1402 (C1402) of 16S rRNA. This Acinetobacter baumannii (strain AB307-0294) protein is Ribosomal RNA small subunit methyltransferase H.